We begin with the raw amino-acid sequence, 621 residues long: MSLDISNYPVLAQANTPDELRQLPQAVLPQLADELRGFLLKSVGKSSGHFASGLGTVELTVALHYVYNTPFDRLIWDVGHQAYPHKILTGRRDKMHTIRQKGGIHPFPWREESEYDTFSVGHSGTSISAALAMAVAAEKEQAGRKVVSVIGDGAMTGGMVFEAMNHAGDLHNDMLVVLNDNEMSISENVGALNNHLAQLMSGRFYTTIRESSKKVLEGMPVIKEMAKRTEEHLKGMVVPGTMFEELGFNYIGPIDGHDVDALVETMRNMRNLSGPQILHIMTKKGRGYEPAEKDPIGWHAVPKFDPSTFEKPASKPSNPTFSQVFGKWLCDVAEKDDKVLGITPAMREGSGMVEFSQRFPKQYFDAAIAEQHAVTLGAGFACEGLKPVVAIYSTFLQRGYDQLIHDVALQKLPVLFAIDRGGIVGADGPTHQGAFDLSFMRTVPNMVIMAPSDENECRQMLYTGYCYREGPTAVRYPRGSATGEPQVEEMQALPIGKGLIKRQGQKVAILNFGTLLADVLTAAESIDATVADMRFVKPLDVELVKELASSHDLLVTVEENAIMGGAGSGVLELLQQLKQPMPVLQIGLPDEFIKHGASGEILAELRLDAAGILEQIEEYLK.

Thiamine diphosphate is bound by residues H80 and 121-123; that span reads GHS. D152 contributes to the Mg(2+) binding site. Thiamine diphosphate contacts are provided by residues 153 to 154, N181, Y288, and E370; that span reads GA. N181 provides a ligand contact to Mg(2+).

This sequence belongs to the transketolase family. DXPS subfamily. Homodimer. The cofactor is Mg(2+). Requires thiamine diphosphate as cofactor.

It catalyses the reaction D-glyceraldehyde 3-phosphate + pyruvate + H(+) = 1-deoxy-D-xylulose 5-phosphate + CO2. The protein operates within metabolic intermediate biosynthesis; 1-deoxy-D-xylulose 5-phosphate biosynthesis; 1-deoxy-D-xylulose 5-phosphate from D-glyceraldehyde 3-phosphate and pyruvate: step 1/1. Functionally, catalyzes the acyloin condensation reaction between C atoms 2 and 3 of pyruvate and glyceraldehyde 3-phosphate to yield 1-deoxy-D-xylulose-5-phosphate (DXP). The polypeptide is 1-deoxy-D-xylulose-5-phosphate synthase (Shewanella sediminis (strain HAW-EB3)).